A 506-amino-acid chain; its full sequence is Putative basic amino acid antiporter YfcC (506 aa).

13 helical membrane passes run 19–39, 107–127, 148–168, 171–191, 208–228, 231–251, 287–307, 310–330, 352–372, 398–418, 419–439, 442–462, and 485–505; these read LVII…VPVG, GTAV…GIVM, ILFI…FGMG, AVAF…DSIT, WMNP…VLSG, LRIV…MVYA, WLVL…VIVN, FIPE…IIGV, MMIA…LVGN, AVAA…VTSG, SGQA…VGVN, VTVL…PTSA, and LLGL…LMGY.

It to H.influenzae HI_0594. This sequence to B.subtilis YcgA.

Its subcellular location is the cell inner membrane. In terms of biological role, metabolomic profiling of different yfcC over-expression and deletion strains suggests that it may affect the glyoxylate shunt. The protein is Putative basic amino acid antiporter YfcC (yfcC) of Escherichia coli (strain K12).